Reading from the N-terminus, the 111-residue chain is Small ribosomal subunit protein bS6 (111 aa).

It belongs to the bacterial ribosomal protein bS6 family.

Functionally, binds together with bS18 to 16S ribosomal RNA. This Francisella philomiragia subsp. philomiragia (strain ATCC 25017 / CCUG 19701 / FSC 153 / O#319-036) protein is Small ribosomal subunit protein bS6.